The chain runs to 273 residues: Undecaprenyl-diphosphatase (273 aa).

The next 8 membrane-spanning stretches (helical) occupy residues 4 to 24, 48 to 68, 89 to 109, 116 to 136, 152 to 172, 193 to 213, 222 to 242, and 252 to 272; these read MELW…FAPV, AANT…VVVF, LNLI…VLFE, LFST…MIAA, ITYK…WPGF, ADFT…LSLL, ADIP…LLAI, and IRLV…YFLY.

The protein belongs to the UppP family.

The protein resides in the cell membrane. The enzyme catalyses di-trans,octa-cis-undecaprenyl diphosphate + H2O = di-trans,octa-cis-undecaprenyl phosphate + phosphate + H(+). Its function is as follows. Catalyzes the dephosphorylation of undecaprenyl diphosphate (UPP). Confers resistance to bacitracin. This chain is Undecaprenyl-diphosphatase, found in Geobacillus kaustophilus (strain HTA426).